The sequence spans 235 residues: Large ribosomal subunit protein uL1 (235 aa).

Belongs to the universal ribosomal protein uL1 family. As to quaternary structure, part of the 50S ribosomal subunit.

Functionally, binds directly to 23S rRNA. The L1 stalk is quite mobile in the ribosome, and is involved in E site tRNA release. Its function is as follows. Protein L1 is also a translational repressor protein, it controls the translation of the L11 operon by binding to its mRNA. In Mycobacterium leprae (strain Br4923), this protein is Large ribosomal subunit protein uL1.